An 823-amino-acid polypeptide reads, in one-letter code: Hypoxia-inducible factor 1-alpha (823 aa).

Positions 1 to 30 are disordered; sequence MEGAGGANDKKKISSERRKEKSRDAARSRR. The interval 1–401 is interaction with TSGA10; the sequence is MEGAGGANDK…KEPDALTLLA (401 aa). Residues 8-30 are compositionally biased toward basic and acidic residues; it reads NDKKKISSERRKEKSRDAARSRR. A bHLH domain is found at 17–70; it reads RRKEKSRDAARSRRSKESEVFYELAHQLPLPHNVSSHLDKASVMRLTISYLRVR. The tract at residues 21–30 is DNA-binding; sequence KSRDAARSRR. The PAS 1 domain maps to 85 to 158; sequence KAQMNCFYLK…THRNGLVKKG (74 aa). The interval 170–191 is required for heterodimer formation with ARNT; the sequence is RMKCTLTSRGRTMNIKSATWKV. Positions 228–298 constitute a PAS 2 domain; that stretch reads PHPSNIEIPL…KTHHDMFTKG (71 aa). Phosphoserine; by CK1 is present on Ser247. The 44-residue stretch at 302–345 folds into the PAC domain; it reads TGQYRMLAKRGGYVWIETQATVIYNTKNSQPQCIVCVNYVVSGI. The tract at residues 401–600 is ODD; the sequence is APAAGDTIIS…QSASTNTVFQ (200 aa). Pro402 is subject to 4-hydroxyproline. A compositionally biased stretch (polar residues) spans 494 to 517; the sequence is IQDQPASPSDGSTRQSSPEPNSPS. The disordered stretch occupies residues 494 to 521; it reads IQDQPASPSDGSTRQSSPEPNSPSEYCF. The interval 531–575 is NTAD; the sequence is FKLELVEKLFAEDTEAKNPFSTQDTDLDLEMLAPYIPMDDDFQLR. N6-acetyllysine; alternate is present on Lys532. Lys532 is covalently cross-linked (Glycyl lysine isopeptide (Lys-Gly) (interchain with G-Cter in ubiquitin); alternate). Residues Lys538 and Lys547 each participate in a glycyl lysine isopeptide (Lys-Gly) (interchain with G-Cter in ubiquitin) cross-link. Ser551 bears the Phosphoserine; by GSK3-beta mark. The residue at position 555 (Thr555) is a Phosphothreonine; by GSK3-beta. The residue at position 564 (Pro564) is a 4-hydroxyproline. Ser576 bears the Phosphoserine; by PLK3 mark. The interval 576–782 is ID; the sequence is SFDQLSPLEN…SDLACRLLGQ (207 aa). Disordered stretches follow at residues 581-602 and 639-685; these read SPLE…FQPT and PSPP…PRSP. The residue at position 589 (Ser589) is a Phosphoserine; by GSK3-beta. Polar residues predominate over residues 651 to 666; sequence ATTSPYSDTGSRTASP. The residue at position 654 (Ser654) is a Phosphoserine; by PLK3. Lys706 is modified (N6-acetyllysine). The Nuclear localization signal signature appears at 715–721; sequence RKRKIEH. Residues 783-823 form a CTAD region; sequence SMDESGLPQLTSYDCEVNAPIQGSRNLLQGEELLRALDQVN. Cys797 is modified (S-nitrosocysteine). Asn800 carries the post-translational modification (3S)-3-hydroxyasparagine.

As to quaternary structure, interacts with the ARNT; forms a heterodimer that binds core DNA sequence 5'-TACGTG-3' within the hypoxia response element (HRE) of target gene promoters. Interacts with COPS5; the interaction increases the transcriptional activity of HIF1A through increased stability. Interacts with EP300 (via TAZ-type 1 domains); the interaction is stimulated in response to hypoxia and inhibited by CITED2. Interacts with CREBBP (via TAZ-type 1 domains). Interacts with NCOA1, NCOA2, APEX1 and HSP90. Interacts (hydroxylated within the ODD domain) with VHLL (via beta domain); the interaction, leads to polyubiquitination and subsequent HIF1A proteasomal degradation. During hypoxia, sumoylated HIF1A also binds VHL; the interaction promotes the ubiquitination of HIF1A. Interacts with SENP1; the interaction desumoylates HIF1A resulting in stabilization and activation of transcription. Interacts (via the ODD domain) with NAA10; the interaction appears not to acetylate HIF1A nor have any affect on protein stability, during hypoxia. Interacts with RWDD3; the interaction enhances HIF1A sumoylation. Interacts with TSGA10. Interacts with HIF3A. Interacts with RORA (via the DNA binding domain); the interaction enhances HIF1A transcription under hypoxia through increasing protein stability. Interaction with PSMA7 inhibits the transactivation activity of HIF1A under both normoxic and hypoxia-mimicking conditions. Interacts with USP20. Interacts with RACK1; promotes HIF1A ubiquitination and proteasome-mediated degradation. Interacts (via N-terminus) with USP19. Interacts with SIRT2. Interacts (deacetylated form) with EGLN1. Interacts with CBFA2T3. Interacts with HSP90AA1 and HSP90AB1. Interacts with DCUN1D1; this interaction increases the interaction between VHL and DCUN1D1. Interacts with HIF1AN. Post-translationally, S-nitrosylation of Cys-797 may be responsible for increased recruitment of p300 coactivator necessary for transcriptional activity of HIF-1 complex. Acetylation of Lys-532 by ARD1 increases interaction with VHL and stimulates subsequent proteasomal degradation. Deacetylation of Lys-706 by SIRT2 increases its interaction with and hydroxylation by EGLN1 thereby inactivating HIF1A activity by inducing its proteasomal degradation. In terms of processing, ubiquitinated; in normoxia, following hydroxylation and interaction with VHL. Lys-532 appears to be the principal site of ubiquitination. Clioquinol, the Cu/Zn-chelator, inhibits ubiquitination through preventing hydroxylation at Asn-800. Ubiquitinated by E3 ligase VHL. Deubiquitinated by UCHL1. Post-translationally, requires phosphorylation for DNA-binding. Phosphorylation at Ser-247 by CSNK1D/CK1 represses kinase activity and impairs ARNT binding. Phosphorylation by GSK3-beta and PLK3 promote degradation by the proteasome. The iron and 2-oxoglutarate dependent 3-hydroxylation of asparagine is (S) stereospecific within HIF CTAD domains. In terms of processing, sumoylated; with SUMO1 under hypoxia. Sumoylation is enhanced through interaction with RWDD3. Both sumoylation and desumoylation seem to be involved in the regulation of its stability during hypoxia. Sumoylation can promote either its stabilization or its VHL-dependent degradation by promoting hydroxyproline-independent HIF1A-VHL complex binding, thus leading to HIF1A ubiquitination and proteasomal degradation. Desumoylation by SENP1 increases its stability amd transcriptional activity. There is a disaccord between various publications on the effect of sumoylation and desumoylation on its stability and transcriptional activity. Post-translationally, in normoxia, is hydroxylated on Pro-402 and Pro-564 in the oxygen-dependent degradation domain (ODD) by EGLN1/PHD2 and EGLN2/PHD1. EGLN3/PHD3 has also been shown to hydroxylate Pro-564. The hydroxylated prolines promote interaction with VHL, initiating rapid ubiquitination and subsequent proteasomal degradation. Deubiquitinated by USP20. Under hypoxia, proline hydroxylation is impaired and ubiquitination is attenuated, resulting in stabilization. In normoxia, is hydroxylated on Asn-800 by HIF1AN, thus abrogating interaction with CREBBP and EP300 and preventing transcriptional activation. Repressed by iron ion, via Fe(2+) prolyl hydroxylase (PHD) enzymes-mediated hydroxylation and subsequent proteasomal degradation.

The protein localises to the cytoplasm. The protein resides in the nucleus. Induced by reactive oxygen species (ROS). Functions as a master transcriptional regulator of the adaptive response to hypoxia. Under hypoxic conditions, activates the transcription of over 40 genes, including erythropoietin, glucose transporters, glycolytic enzymes, vascular endothelial growth factor, HILPDA, and other genes whose protein products increase oxygen delivery or facilitate metabolic adaptation to hypoxia. Plays an essential role in embryonic vascularization, tumor angiogenesis and pathophysiology of ischemic disease. Heterodimerizes with ARNT; heterodimer binds to core DNA sequence 5'-TACGTG-3' within the hypoxia response element (HRE) of target gene promoters. Activation requires recruitment of transcriptional coactivators such as CREBBP and EP300. Activity is enhanced by interaction with NCOA1 and/or NCOA2. Interaction with redox regulatory protein APEX1 seems to activate CTAD and potentiates activation by NCOA1 and CREBBP. Involved in the axonal distribution and transport of mitochondria in neurons during hypoxia. The sequence is that of Hypoxia-inducible factor 1-alpha (HIF1A) from Bos taurus (Bovine).